A 472-amino-acid polypeptide reads, in one-letter code: MAGKTLYDKLWDDHVVTQRDDGSCLLYIDRHLLHEVTSPQAFEGLQLAGRQPWRLSANVATPDHNVPTSKKERDQGIAGIEDDTSRIQVQTLDDNCKAFNIVEFGINDIRQGIVHVVGPEQGLTLPGMTVVCGDSHTATHGAFGCLAHGIGTSEVEHVLATQCLVQKKSKNMLVRVDGVLGKGVTPKDVVLAIIGKIGTAGGTGYAIEFGGQVFRDMSIEGRMTVCNMAIEAGARVGMVAVDDKTIEYVKGRSYAPKGEQWEQAVAYWNTLHSDDDAVFDAVVELNGAEIEPQVSWGTSPEMVIPVSKAVPTLEQAKDDVQRNDWTRAYQYMGLNAGQALADIQLDRVFIGSCTNSRIEDIRAAAEVVKGRKVAPSIKQAMIVPGSGLVKQQAEKEGLDKIFLEAGFEWREPGCSMCLAMNADKLQPGEHCASTSNRNFEGRQGNGGRTHLVSPAMAAAAAIAGHFVDVRSF.

The [4Fe-4S] cluster site is built by C353, C414, and C417.

Belongs to the aconitase/IPM isomerase family. LeuC type 1 subfamily. As to quaternary structure, heterodimer of LeuC and LeuD. Requires [4Fe-4S] cluster as cofactor.

It carries out the reaction (2R,3S)-3-isopropylmalate = (2S)-2-isopropylmalate. Its pathway is amino-acid biosynthesis; L-leucine biosynthesis; L-leucine from 3-methyl-2-oxobutanoate: step 2/4. Catalyzes the isomerization between 2-isopropylmalate and 3-isopropylmalate, via the formation of 2-isopropylmaleate. The polypeptide is 3-isopropylmalate dehydratase large subunit (Acinetobacter baumannii (strain AB307-0294)).